We begin with the raw amino-acid sequence, 54 residues long: Large ribosomal subunit protein bL33C (54 aa).

Belongs to the bacterial ribosomal protein bL33 family.

This chain is Large ribosomal subunit protein bL33C, found in Streptomyces griseus subsp. griseus (strain JCM 4626 / CBS 651.72 / NBRC 13350 / KCC S-0626 / ISP 5235).